The primary structure comprises 256 residues: N-acetylglucosaminyldiphosphoundecaprenol N-acetyl-beta-D-mannosaminyltransferase (256 aa).

This sequence belongs to the glycosyltransferase 26 family. TagA/TarA subfamily.

The catalysed reaction is UDP-N-acetyl-alpha-D-mannosamine + N-acetyl-alpha-D-glucosaminyl-di-trans,octa-cis-undecaprenyl diphosphate = N-acetyl-beta-D-mannosaminyl-(1-&gt;4)-N-acetyl-alpha-D-glucosaminyl di-trans,octa-cis-undecaprenyl diphosphate + UDP + H(+). It functions in the pathway cell wall biogenesis; poly(glycerol phosphate) teichoic acid biosynthesis. Functionally, catalyzes the conversion of GlcNAc-PP-undecaprenol into ManNAc-GlcNAc-PP-undecaprenol, the first committed lipid intermediate in the de novo synthesis of teichoic acid. The polypeptide is N-acetylglucosaminyldiphosphoundecaprenol N-acetyl-beta-D-mannosaminyltransferase (Bacillus subtilis (strain 168)).